The following is a 211-amino-acid chain: MTSQRTRERLIQRLYEEGLSNARVLEVIRRTPRHLFVDEALAHRAYEDTALPIGHNQTISQPYMVGRMTELLLAAGPLDKVLEIGTGSGYQTAVLAQLVERVFSVERIQVLQDRAKERLAELSLRNVVFRWGDGWEGWNALGPYNGIIVTAAAAQVPQALLDQLAPGGRLVIPVGAGDVQQLLLIVREEHGFSRHVLDAVRFVPLLNGPLA.

Ser60 is an active-site residue.

It belongs to the methyltransferase superfamily. L-isoaspartyl/D-aspartyl protein methyltransferase family.

The protein localises to the cytoplasm. The catalysed reaction is [protein]-L-isoaspartate + S-adenosyl-L-methionine = [protein]-L-isoaspartate alpha-methyl ester + S-adenosyl-L-homocysteine. Catalyzes the methyl esterification of L-isoaspartyl residues in peptides and proteins that result from spontaneous decomposition of normal L-aspartyl and L-asparaginyl residues. It plays a role in the repair and/or degradation of damaged proteins. This chain is Protein-L-isoaspartate O-methyltransferase, found in Ectopseudomonas mendocina (strain ymp) (Pseudomonas mendocina).